We begin with the raw amino-acid sequence, 427 residues long: Enolase (427 aa).

Q162 provides a ligand contact to (2R)-2-phosphoglycerate. E204 serves as the catalytic Proton donor. D241, E284, and D311 together coordinate Mg(2+). (2R)-2-phosphoglycerate-binding residues include K336, R365, S366, and K387. K336 acts as the Proton acceptor in catalysis.

The protein belongs to the enolase family. Requires Mg(2+) as cofactor.

It localises to the cytoplasm. Its subcellular location is the secreted. The protein resides in the cell surface. The enzyme catalyses (2R)-2-phosphoglycerate = phosphoenolpyruvate + H2O. It participates in carbohydrate degradation; glycolysis; pyruvate from D-glyceraldehyde 3-phosphate: step 4/5. Catalyzes the reversible conversion of 2-phosphoglycerate (2-PG) into phosphoenolpyruvate (PEP). It is essential for the degradation of carbohydrates via glycolysis. The chain is Enolase from Natranaerobius thermophilus (strain ATCC BAA-1301 / DSM 18059 / JW/NM-WN-LF).